The sequence spans 239 residues: uncharacterized protein (239 aa).

This is an uncharacterized protein from Methanocaldococcus jannaschii (strain ATCC 43067 / DSM 2661 / JAL-1 / JCM 10045 / NBRC 100440) (Methanococcus jannaschii).